The primary structure comprises 137 residues: UPF0148 protein MJ0890 (137 aa).

It belongs to the UPF0148 family.

The protein is UPF0148 protein MJ0890 of Methanocaldococcus jannaschii (strain ATCC 43067 / DSM 2661 / JAL-1 / JCM 10045 / NBRC 100440) (Methanococcus jannaschii).